The primary structure comprises 307 residues: Cyclin-dependent kinase 5 activator 1 (307 aa).

The N-myristoyl glycine moiety is linked to residue Gly2. At Ser8 the chain carries Phosphoserine; by CDK5. Residues 97–133 are disordered; sequence TFAQPPPAQPPAPPASQLSGSQTGVSSSVKKAPHPAI. Positions 100–110 are enriched in pro residues; sequence QPPPAQPPAPP. Residues 112 to 125 show a composition bias toward polar residues; that stretch reads SQLSGSQTGVSSSV. Thr138 bears the Phosphothreonine; by CDK5 mark.

Belongs to the cyclin-dependent kinase 5 activator family. In terms of assembly, heterodimer composed of a catalytic subunit CDK5 and a regulatory subunit CDK5R1 (p25) and macromolecular complex composed of at least CDK5, CDK5R1 (p35) and CDK5RAP1 or CDK5RAP2 or CDK5RAP3. Only the heterodimer shows kinase activity. Interacts with EPHA4 and NGEF; may mediate the activation of NGEF by EPHA4. Interacts with RASGRF2. The complex p35/CDK5 interacts with CLOCK. Post-translationally, the p35 form is proteolytically cleaved by calpain, giving rise to the p25 form. P35 has a 5 to 10 fold shorter half-life compared to p25. The conversion results in deregulation of the CDK5 kinase: p25/CDK5 kinase displays an increased and altered tau phosphorylation in comparison to the p35/CDK5 kinase in vivo. In terms of processing, myristoylated. A proper myristoylation signal is essential for the proper distribution of p35. Phosphorylation at Ser-8 and Thr-138 by CDK5 prevents calpain-mediated proteolysis. Post-translationally, ubiquitinated, leading to its degradation: degradation of p35 by proteasome results in down-regulation of CDK5 activity. During this process, CDK5 phosphorylates p35 and induces its ubiquitination and subsequent degradation. Ubiquitinated by the CRL2(FEM1B) complex, which recognizes the -Gly-Leu-Asp-Arg C-degron at the C-terminus, leading to its degradation. Brain and neuron specific.

Its subcellular location is the cell membrane. It localises to the cell projection. The protein resides in the neuron projection. The protein localises to the nucleus. It is found in the cytoplasm. Its subcellular location is the perinuclear region. It localises to the perikaryon. In terms of biological role, p35 is a neuron specific activator of CDK5. The complex p35/CDK5 is required for neurite outgrowth and cortical lamination. Involved in dendritic spine morphogenesis by mediating the EFNA1-EPHA4 signaling. Activator of TPKII. The complex p35/CDK5 participates in the regulation of the circadian clock by modulating the function of CLOCK protein: phosphorylates CLOCK at 'Thr-451' and 'Thr-461' and regulates the transcriptional activity of the CLOCK-BMAL1 heterodimer in association with altered stability and subcellular distribution. The chain is Cyclin-dependent kinase 5 activator 1 (Cdk5r1) from Rattus norvegicus (Rat).